The following is a 240-amino-acid chain: Ribose-5-phosphate isomerase A (240 aa).

The segment at 1–23 (MKTSGGSDAAKRRAGESAAETVT) is disordered. Substrate is bound by residues 32 to 35 (TGST), 92 to 95 (DGAD), and 111 to 114 (KGGG). The active-site Proton acceptor is glutamate 120. Residue lysine 138 participates in substrate binding.

It belongs to the ribose 5-phosphate isomerase family. In terms of assembly, homodimer.

The catalysed reaction is aldehydo-D-ribose 5-phosphate = D-ribulose 5-phosphate. The protein operates within carbohydrate degradation; pentose phosphate pathway; D-ribose 5-phosphate from D-ribulose 5-phosphate (non-oxidative stage): step 1/1. Catalyzes the reversible conversion of ribose-5-phosphate to ribulose 5-phosphate. This Halorubrum lacusprofundi (strain ATCC 49239 / DSM 5036 / JCM 8891 / ACAM 34) protein is Ribose-5-phosphate isomerase A.